Here is a 239-residue protein sequence, read N- to C-terminus: 1-(5-phosphoribosyl)-5-[(5-phosphoribosylamino)methylideneamino] imidazole-4-carboxamide isomerase (239 aa).

The Proton acceptor role is filled by D8. D129 functions as the Proton donor in the catalytic mechanism.

It belongs to the HisA/HisF family.

The protein resides in the cytoplasm. It carries out the reaction 1-(5-phospho-beta-D-ribosyl)-5-[(5-phospho-beta-D-ribosylamino)methylideneamino]imidazole-4-carboxamide = 5-[(5-phospho-1-deoxy-D-ribulos-1-ylimino)methylamino]-1-(5-phospho-beta-D-ribosyl)imidazole-4-carboxamide. It participates in amino-acid biosynthesis; L-histidine biosynthesis; L-histidine from 5-phospho-alpha-D-ribose 1-diphosphate: step 4/9. The chain is 1-(5-phosphoribosyl)-5-[(5-phosphoribosylamino)methylideneamino] imidazole-4-carboxamide isomerase from Bacillus cereus (strain B4264).